The primary structure comprises 314 residues: Malate dehydrogenase (314 aa).

NAD(+) is bound by residues 11 to 16 and aspartate 35; that span reads GSGNIG. Substrate contacts are provided by arginine 84 and arginine 90. NAD(+) contacts are provided by residues asparagine 97 and 120 to 122; that span reads ITN. Residues asparagine 122 and arginine 153 each coordinate substrate. The active-site Proton acceptor is histidine 177.

Belongs to the LDH/MDH superfamily. MDH type 3 family.

It catalyses the reaction (S)-malate + NAD(+) = oxaloacetate + NADH + H(+). Catalyzes the reversible oxidation of malate to oxaloacetate. The protein is Malate dehydrogenase of Rickettsia canadensis (strain McKiel).